The chain runs to 90 residues: Protein AF1q (90 aa).

The Nuclear export signal signature appears at 24–32 (LSELEGLGL). The residue at position 84 (Ser84) is a Phosphoserine.

It belongs to the MLLT11 family. Interacts with HSPA8 and LAMP2 isoform A; the interaction may target MLLT11 for degradation via chaperone-mediated autophagy. Interacts with TCF7. In terms of processing, ubiquitinated, leading to degradation.

It localises to the nucleus. The protein localises to the cytoplasm. Its subcellular location is the cytoskeleton. The protein resides in the microtubule organizing center. It is found in the centrosome. In terms of biological role, cofactor for the transcription factor TCF7. Involved in regulation of lymphoid development by driving multipotent hematopoietic progenitor cells towards a T-cell fate. The protein is Protein AF1q (MLLT11) of Pongo abelii (Sumatran orangutan).